Consider the following 362-residue polypeptide: Aminomethyltransferase (362 aa).

The protein belongs to the GcvT family. In terms of assembly, the glycine cleavage system is composed of four proteins: P, T, L and H.

The catalysed reaction is N(6)-[(R)-S(8)-aminomethyldihydrolipoyl]-L-lysyl-[protein] + (6S)-5,6,7,8-tetrahydrofolate = N(6)-[(R)-dihydrolipoyl]-L-lysyl-[protein] + (6R)-5,10-methylene-5,6,7,8-tetrahydrofolate + NH4(+). In terms of biological role, the glycine cleavage system catalyzes the degradation of glycine. This chain is Aminomethyltransferase, found in Bacillus subtilis (strain 168).